A 175-amino-acid chain; its full sequence is Ribosome maturation factor RimM (175 aa).

A PRC barrel domain is found at 96–175; that stretch reads DGDYYWKDLI…IIKVDWDPEF (80 aa).

It belongs to the RimM family. In terms of assembly, binds ribosomal protein uS19.

It localises to the cytoplasm. In terms of biological role, an accessory protein needed during the final step in the assembly of 30S ribosomal subunit, possibly for assembly of the head region. Essential for efficient processing of 16S rRNA. May be needed both before and after RbfA during the maturation of 16S rRNA. It has affinity for free ribosomal 30S subunits but not for 70S ribosomes. The sequence is that of Ribosome maturation factor RimM from Baumannia cicadellinicola subsp. Homalodisca coagulata.